Consider the following 457-residue polypeptide: MTTRHLYLDTSPPAYTGSRTELDKSAFHKTLPVLAVRVRPEKVGKFLKGDAMKRALLDIPKVRTVVSDPKEEGNRLVLLRMPNEGDIPPEALELIKTESNGLTEFNVNLDYNYWTADEILQSFLPEELREGAPSGFAMVGHIAHLNLNEEYLPYKYIIGQLILEKNNRVRTVVNKINSIDTQFRFFKMELLAGEPDYVVEHHESDCRFMFDFTKVYWNSRLHTEHDRLIQVFQPEEVVADVFAGVGPFAIPAGKKGCGVLANDLNPESYKYLAINAKNNRVDDTVKAFCEDGREFIQKSVSRLWEEPLPAYTGPKQSRVQEEKERRRLQRLKAEGQTVPIPPSEKQHGRRRISHFVMNLPDSAISFLDAFRGLLSGAEPALREQYSTMPMVHCHCFTREVDSRVNAEGDIRKRVEEKLGGALTSETSFHFVRSVAPNKDMYCISFRLPPEVAFGERM.

Residues His-225, 263 to 264 (DL), 291 to 292 (DG), and Asn-358 each bind S-adenosyl-L-methionine.

This sequence belongs to the class I-like SAM-binding methyltransferase superfamily. TRM5/TYW2 family. In terms of assembly, monomer.

The protein resides in the mitochondrion matrix. Its subcellular location is the nucleus. The protein localises to the cytoplasm. The enzyme catalyses guanosine(37) in tRNA + S-adenosyl-L-methionine = N(1)-methylguanosine(37) in tRNA + S-adenosyl-L-homocysteine + H(+). In terms of biological role, specifically methylates the N1 position of guanosine-37 in various cytoplasmic and mitochondrial tRNAs. Methylation is not dependent on the nature of the nucleoside 5' of the target nucleoside. This is the first step in the biosynthesis of wybutosine (yW), a modified base adjacent to the anticodon of tRNAs and required for accurate decoding. In Coprinopsis cinerea (strain Okayama-7 / 130 / ATCC MYA-4618 / FGSC 9003) (Inky cap fungus), this protein is tRNA (guanine(37)-N(1))-methyltransferase.